A 295-amino-acid polypeptide reads, in one-letter code: N-acetylmuramic acid 6-phosphate etherase (295 aa).

The SIS domain occupies 53–216 (TTEQFKQGGR…STITMVGVGK (164 aa)). Catalysis depends on glutamate 81, which acts as the Proton donor. Glutamate 112 is a catalytic residue.

The protein belongs to the GCKR-like family. MurNAc-6-P etherase subfamily. Homodimer.

It catalyses the reaction N-acetyl-D-muramate 6-phosphate + H2O = N-acetyl-D-glucosamine 6-phosphate + (R)-lactate. The protein operates within amino-sugar metabolism; N-acetylmuramate degradation. In terms of biological role, specifically catalyzes the cleavage of the D-lactyl ether substituent of MurNAc 6-phosphate, producing GlcNAc 6-phosphate and D-lactate. This chain is N-acetylmuramic acid 6-phosphate etherase, found in Staphylococcus saprophyticus subsp. saprophyticus (strain ATCC 15305 / DSM 20229 / NCIMB 8711 / NCTC 7292 / S-41).